The chain runs to 398 residues: Dihydrolipoyllysine-residue succinyltransferase component of 2-oxoglutarate dehydrogenase complex (398 aa).

The Lipoyl-binding domain maps to 2 to 77 (SIKIIIPSLG…TVGEEVGEIN (76 aa)). Lysine 43 carries the N6-lipoyllysine modification. The 38-residue stretch at 112–149 (ILAPSVQKLVTENKLDPNNIKGTGRGGRITKYDVLETI) folds into the Peripheral subunit-binding (PSBD) domain. Catalysis depends on residues histidine 369 and aspartate 373.

This sequence belongs to the 2-oxoacid dehydrogenase family. In terms of assembly, forms a 24-polypeptide structural core with octahedral symmetry. Part of the 2-oxoglutarate dehydrogenase (OGDH) complex composed of E1 (2-oxoglutarate dehydrogenase), E2 (dihydrolipoamide succinyltransferase) and E3 (dihydrolipoamide dehydrogenase); the complex contains multiple copies of the three enzymatic components (E1, E2 and E3). The cofactor is (R)-lipoate.

The enzyme catalyses N(6)-[(R)-dihydrolipoyl]-L-lysyl-[protein] + succinyl-CoA = N(6)-[(R)-S(8)-succinyldihydrolipoyl]-L-lysyl-[protein] + CoA. The protein operates within amino-acid degradation; L-lysine degradation via saccharopine pathway; glutaryl-CoA from L-lysine: step 6/6. E2 component of the 2-oxoglutarate dehydrogenase (OGDH) complex which catalyzes the second step in the conversion of 2-oxoglutarate to succinyl-CoA and CO(2). This Rickettsia typhi (strain ATCC VR-144 / Wilmington) protein is Dihydrolipoyllysine-residue succinyltransferase component of 2-oxoglutarate dehydrogenase complex (sucB).